The chain runs to 222 residues: LHFPL tetraspan subfamily member 3 protein (222 aa).

Transmembrane regions (helical) follow at residues 22–42 (IGVL…VCFI), 96–116 (FFIG…TLFF), 126–146 (ICAW…MIFP), and 177–197 (ILAI…VVLG).

The protein belongs to the LHFP family. Brain-specific.

It localises to the membrane. This chain is LHFPL tetraspan subfamily member 3 protein, found in Mus musculus (Mouse).